Here is a 124-residue protein sequence, read N- to C-terminus: Fluoride-specific ion channel FluC (124 aa).

4 helical membrane-spanning segments follow: residues 6–26 (LLIGVGGFFGAIFRYLISGIV), 37–57 (LAVNLIGSFILGFLLYCSLFA), 69–89 (TGFCGALTTFSTFSYETFVLV), and 92–112 (GLLFKALLNILINVVGCLIMV). 2 residues coordinate Na(+): glycine 73 and threonine 76.

It belongs to the fluoride channel Fluc/FEX (TC 1.A.43) family.

The protein localises to the cell membrane. It catalyses the reaction fluoride(in) = fluoride(out). Na(+) is not transported, but it plays an essential structural role and its presence is essential for fluoride channel function. Fluoride-specific ion channel. Important for reducing fluoride concentration in the cell, thus reducing its toxicity. The polypeptide is Fluoride-specific ion channel FluC (Methanocaldococcus jannaschii (strain ATCC 43067 / DSM 2661 / JAL-1 / JCM 10045 / NBRC 100440) (Methanococcus jannaschii)).